Here is a 284-residue protein sequence, read N- to C-terminus: MPELPEVEVTRRGLLPHVVGRRIADVTVRHRGLRWPVEDDLEARLAGRLVRRIERRGKYLLLECVDEATDDAGWLLVHLGMTGTLRVLPDAPPAGAHDHLDLVLDDAGGSRIVLRFRDPRRFGAVLWSPLSEAMLPGHPLLRGLGIEPFDSHFDGSWLHRHTRGRSAAIKTVLLAGNIVVGVGNIYASESLFRAGIRPTTPAGRLSLARCERLAQSVRETLAQAIERGGSTLRDFVGSDGASGYFQLECFVYDRAGEPCKVCGTPVRQIVQGQRSTFYCTHCQH.

Catalysis depends on proline 2, which acts as the Schiff-base intermediate with DNA. Catalysis depends on glutamate 3, which acts as the Proton donor. The active-site Proton donor; for beta-elimination activity is the lysine 58. Positions 97, 120, and 165 each coordinate DNA. The segment at 250-284 adopts an FPG-type zinc-finger fold; sequence FVYDRAGEPCKVCGTPVRQIVQGQRSTFYCTHCQH. Residue arginine 274 is the Proton donor; for delta-elimination activity of the active site.

This sequence belongs to the FPG family. Monomer. It depends on Zn(2+) as a cofactor.

It catalyses the reaction Hydrolysis of DNA containing ring-opened 7-methylguanine residues, releasing 2,6-diamino-4-hydroxy-5-(N-methyl)formamidopyrimidine.. The enzyme catalyses 2'-deoxyribonucleotide-(2'-deoxyribose 5'-phosphate)-2'-deoxyribonucleotide-DNA = a 3'-end 2'-deoxyribonucleotide-(2,3-dehydro-2,3-deoxyribose 5'-phosphate)-DNA + a 5'-end 5'-phospho-2'-deoxyribonucleoside-DNA + H(+). Functionally, involved in base excision repair of DNA damaged by oxidation or by mutagenic agents. Acts as a DNA glycosylase that recognizes and removes damaged bases. Has a preference for oxidized purines, such as 7,8-dihydro-8-oxoguanine (8-oxoG). Has AP (apurinic/apyrimidinic) lyase activity and introduces nicks in the DNA strand. Cleaves the DNA backbone by beta-delta elimination to generate a single-strand break at the site of the removed base with both 3'- and 5'-phosphates. In Cupriavidus pinatubonensis (strain JMP 134 / LMG 1197) (Cupriavidus necator (strain JMP 134)), this protein is Formamidopyrimidine-DNA glycosylase.